A 139-amino-acid chain; its full sequence is Putative nickel-responsive regulator (139 aa).

Ni(2+)-binding residues include His-79, His-90, His-92, and Cys-98.

This sequence belongs to the transcriptional regulatory CopG/NikR family. The cofactor is Ni(2+).

Its function is as follows. Transcriptional regulator. The chain is Putative nickel-responsive regulator from Geobacter sp. (strain M21).